Here is a 383-residue protein sequence, read N- to C-terminus: NIPA-like protein 2 (383 aa).

N-linked (GlcNAc...) asparagine glycans are attached at residues N23 and N33. 9 helical membrane-spanning segments follow: residues I46 to N66, V88 to Y108, L115 to L135, L144 to I164, F177 to L197, I208 to A228, L243 to V263, V278 to Y298, and F306 to V326. The disordered stretch occupies residues D352–S383.

It belongs to the NIPA family.

It is found in the membrane. The chain is NIPA-like protein 2 (Nipal2) from Mus musculus (Mouse).